The chain runs to 658 residues: Transcription factor E2-alpha (658 aa).

6 disordered regions span residues Ser42–Tyr82, Ser140–Asn191, Asn276–Thr313, Asp331–Gly372, Val460–Val558, and Glu628–Met658. The Nuclear localization signal signature appears at Pro173–Val179. The span at Asn276 to Asp303 shows a compositional bias: polar residues. Positions Ser333–Pro344 are enriched in low complexity. Residues Val345 to Gly355 are compositionally biased toward polar residues. A compositionally biased stretch (basic and acidic residues) spans Pro493 to Ser507. The span at Gln533–Leu544 shows a compositional bias: acidic residues. A compositionally biased stretch (basic and acidic residues) spans Gln548–Val558. The bHLH domain maps to Glu555–Leu608.

In terms of assembly, homodimer. Heterodimer; efficient DNA binding requires dimerization with another bHLH protein. Interacts with tgfb1i1.

It localises to the nucleus. Its function is as follows. Transcriptional regulator involved in the initiation of neuronal differentiation and mesenchymal to epithelial transition. Heterodimers between tcf3 and tissue-specific basic helix-loop-helix (bHLH) proteins play major roles in determining tissue-specific cell fate during embryogenesis, like muscle or early B-cell differentiation. Together with tcf15, required for the mesenchymal to epithelial transition. Dimers bind DNA on E-box motifs: 5'-CANNTG-3'. This chain is Transcription factor E2-alpha (tcf3), found in Xenopus laevis (African clawed frog).